Here is a 390-residue protein sequence, read N- to C-terminus: MAKHCQGAAAEDISAVSDEELLRWSKEELIKRLRKVDNEKMSLMLEHGNMMKDVNRRLQLHLHEIRGLKDVNQKLQDESQELRELCCFLDDDRQKGKKLSREWQRFGRHSATVVWKEVGTYQQKLKELEAKQESLVRDNLELKEIILMLDEERNGPGSRSSIDSQNSLTNLNGGSGPRDVGDGSSTSSTGSAGSPDHHHHHHHIKTTENKAGTIRKSTDDLSVPPHHRSIPNGLNDSSTTYIRQLETRVKLLEDDNKLLSQHSTSGELRTLRKGLSPYHSESQLSSLPQYQEPLQNGSARVAPEVSSTAPAGYIPVVQKPEAVVHAMKVLEVHENLDRQIPDTYEEDLSEKEKAIVREMCNVVWRKLGDAANSKPSIRQHLSGNQFKGPL.

2 coiled-coil regions span residues 26–86 (KEEL…RELC) and 116–146 (KEVG…KEII). Residues 153–237 (RNGPGSRSSI…RSIPNGLNDS (85 aa)) form a disordered region. The segment covering 157 to 172 (GSRSSIDSQNSLTNLN) has biased composition (polar residues). A compositionally biased stretch (low complexity) spans 182-194 (DGSSTSSTGSAGS).

This sequence belongs to the CCDC85 family.

The protein resides in the cell junction. It is found in the tight junction. The protein localises to the adherens junction. In terms of biological role, may play a role in cell-cell adhesion and epithelium development. May play an important role in cortical development, especially in the maintenance of radial glia. The protein is Coiled-coil domain-containing protein 85C (ccdc85c) of Xenopus laevis (African clawed frog).